We begin with the raw amino-acid sequence, 437 residues long: Transcription factor AP-2-alpha (437 aa).

Lysine 10 is covalently cross-linked (Glycyl lysine isopeptide (Lys-Gly) (interchain with G-Cter in SUMO); alternate). Lysine 10 is covalently cross-linked (Glycyl lysine isopeptide (Lys-Gly) (interchain with G-Cter in SUMO2); alternate). The interval 14–107 (CEDRHDGASN…GQRQSQESGL (94 aa)) is disordered. A PPxY motif motif is present at residues 57 to 62 (YFPPPY). 2 stretches are compositionally biased toward low complexity: residues 65–74 (IYPQSQDPYS) and 88–101 (QPQPQHPGWPGQRQ). Glycyl lysine isopeptide (Lys-Gly) (interchain with G-Cter in SUMO2) cross-links involve residues lysine 177 and lysine 184. At serine 239 the chain carries Phosphoserine; by PKA. The tract at residues 280-410 (RRKAANVTLL…YLTEALKAMD (131 aa)) is H-S-H (helix-span-helix), dimerization. The segment covering 414–427 (LSNNPNSHTDNNAK) has biased composition (polar residues). The disordered stretch occupies residues 414 to 437 (LSNNPNSHTDNNAKSSDKEEKHRK). Residues 428–437 (SSDKEEKHRK) are compositionally biased toward basic and acidic residues.

The protein belongs to the AP-2 family. Binds DNA as a dimer. Can form homodimers or heterodimers with other AP-2 family members. Interacts with WWOX. Interacts with CITED4. Interacts with UBE2I. Interacts with RALBP1 in a complex also containing EPN1 and NUMB during interphase and mitosis. Interacts with KCTD1; this interaction represses transcription activation. Interacts (via C-terminus) with CITED2 (via C-terminus); the interaction stimulates TFAP2A-transcriptional activation. Interacts (via N-terminus) with EP300 (via N-terminus); the interaction requires CITED2. Interacts with KCTD15; this interaction inhibits TFAP2A transcriptional activation. In terms of processing, sumoylated on Lys-10; which inhibits transcriptional activity.

It is found in the nucleus. Functionally, sequence-specific DNA-binding protein that interacts with inducible viral and cellular enhancer elements to regulate transcription of selected genes. AP-2 factors bind to the consensus sequence 5'-GCCNNNGGC-3' and activate genes involved in a large spectrum of important biological functions including proper eye, face, body wall, limb and neural tube development. They also suppress a number of genes including MCAM/MUC18, C/EBP alpha and MYC. AP-2-alpha is the only AP-2 protein required for early morphogenesis of the lens vesicle. Together with the CITED2 coactivator, stimulates the PITX2 P1 promoter transcription activation. Associates with chromatin to the PITX2 P1 promoter region. This Bos taurus (Bovine) protein is Transcription factor AP-2-alpha (TFAP2A).